The primary structure comprises 260 residues: Tetraspanin-14 (260 aa).

Residues 1-10 (MKSQSHKPWN) lie on the Cytoplasmic side of the membrane. A helical membrane pass occupies residues 11–31 (LVAGIFFPIITFFLSAPLVGH). The Extracellular portion of the chain corresponds to 32-54 (ALYLFCMRNDHVYYRDFQSTLPR). The helical transmembrane segment at 55–75 (VQTLVSVSLLALFLLSNIGMF) threads the bilayer. Residues 76-80 (LRPRR) are Cytoplasmic-facing. A helical transmembrane segment spans residues 81 to 101 (LSYFLVIVFFIGFAYSGVYKM). Over 102-260 (ESRRFSPTPM…FLSSLTSLFR (159 aa)) the chain is Extracellular. Asn182 is a glycosylation site (N-linked (GlcNAc...) asparagine).

Belongs to the tetraspanin (TM4SF) family.

It localises to the membrane. Its function is as follows. May be involved in the regulation of cell differentiation. The chain is Tetraspanin-14 (TET14) from Arabidopsis thaliana (Mouse-ear cress).